We begin with the raw amino-acid sequence, 389 residues long: Lipopolysaccharide assembly protein B (389 aa).

Residues 1 to 20 (MLELLFLLLPVAAAYGWYMG) form a helical membrane-spanning segment. Topologically, residues 21–389 (RRSAQQNKQD…IKPIRGLDGL (369 aa)) are cytoplasmic. 7 TPR repeats span residues 35–68 (LSRD…DTGT), 69–102 (VEAH…ASLT), 107–140 (LLAI…TDFR), 142–174 (GALQ…GKDK), 180–213 (AHFY…DKNS), 214–247 (ARVS…DREL), and 249–282 (SETL…NTGA). 4 residues coordinate Fe cation: Cys-357, Cys-360, Cys-371, and Cys-374.

The protein belongs to the LapB family.

It localises to the cell inner membrane. Functionally, modulates cellular lipopolysaccharide (LPS) levels by regulating LpxC, which is involved in lipid A biosynthesis. May act by modulating the proteolytic activity of FtsH towards LpxC. May also coordinate assembly of proteins involved in LPS synthesis at the plasma membrane. The polypeptide is Lipopolysaccharide assembly protein B (Escherichia coli O157:H7).